The primary structure comprises 403 residues: Argininosuccinate synthase (403 aa).

8–16 contributes to the ATP binding site; that stretch reads AYSGGLDTS. Position 87 (Tyr87) interacts with L-citrulline. Gly117 is an ATP binding site. Thr119, Asn123, and Asp124 together coordinate L-aspartate. Residue Asn123 participates in L-citrulline binding. Residues Arg127, Ser175, Glu259, and Tyr271 each contribute to the L-citrulline site.

The protein belongs to the argininosuccinate synthase family. Type 1 subfamily. In terms of assembly, homotetramer.

The protein resides in the cytoplasm. The catalysed reaction is L-citrulline + L-aspartate + ATP = 2-(N(omega)-L-arginino)succinate + AMP + diphosphate + H(+). The protein operates within amino-acid biosynthesis; L-arginine biosynthesis; L-arginine from L-ornithine and carbamoyl phosphate: step 2/3. The sequence is that of Argininosuccinate synthase from Salinispora arenicola (strain CNS-205).